The primary structure comprises 626 residues: Serine/threonine-protein kinase PknH (626 aa).

The Cytoplasmic segment spans residues 1–403 (MSDAQDSRVG…QTPRKTNPWP (403 aa)). The 261-residue stretch at 16-276 (YHLKRLLGRG…DLALAAHEAL (261 aa)) folds into the Protein kinase domain. ATP is bound by residues 22 to 30 (LGRGGMGEV) and lysine 45. The active-site Proton acceptor is aspartate 139. Position 170 is a phosphothreonine (threonine 170). Residues 292–396 (QESTLPAPPK…GGPSPWAQTP (105 aa)) form a disordered region. 2 stretches are compositionally biased toward pro residues: residues 297 to 308 (PAPPKPVPPPTM) and 316 to 342 (RQPP…PAQP). Residues 343-355 (GPAGQRPGPTGQP) show a composition bias toward low complexity. Residues 404 to 424 (LVAGAAAVVLVLVLGAIGIWI) traverse the membrane as a helical segment. Residues 425–626 (AIRPKPVQPP…AKIVDKVNKE (202 aa)) lie on the Extracellular side of the membrane. 2 disulfides stabilise this stretch: cysteine 482–cysteine 545 and cysteine 587–cysteine 604.

It belongs to the protein kinase superfamily. Ser/Thr protein kinase family. A divalent metal cation serves as cofactor. Post-translationally, autophosphorylated on threonine and serine residues. Dephosphorylated by PstP.

The protein resides in the cell membrane. It catalyses the reaction L-seryl-[protein] + ATP = O-phospho-L-seryl-[protein] + ADP + H(+). The enzyme catalyses L-threonyl-[protein] + ATP = O-phospho-L-threonyl-[protein] + ADP + H(+). Inhibited by the kinase inhibitors staurosporine and H-7. In terms of biological role, may regulate bacterial growth in response to external signals to facilitate adaptation to the host environment. In vitro, phosphorylates several substrates such as EmbR, DevR (DosR), DacB1 and Rv0681. This chain is Serine/threonine-protein kinase PknH (pknH), found in Mycobacterium tuberculosis (strain ATCC 25618 / H37Rv).